A 106-amino-acid polypeptide reads, in one-letter code: Iron-sulfur cluster assembly protein CyaY (106 aa).

The protein belongs to the frataxin family.

Its function is as follows. Involved in iron-sulfur (Fe-S) cluster assembly. May act as a regulator of Fe-S biogenesis. The sequence is that of Iron-sulfur cluster assembly protein CyaY from Salmonella agona (strain SL483).